A 590-amino-acid chain; its full sequence is Beta-glucosidase 29 (590 aa).

A signal peptide spans 1-21; the sequence is MNVQIFILLLIISWLTPKITS. A beta-D-glucoside is bound by residues glutamine 48, histidine 151, and 196-197; that span reads NE. Glutamate 197 functions as the Proton donor in the catalytic mechanism. A disulfide bridge connects residues cysteine 216 and cysteine 224. Residues asparagine 255 and asparagine 331 are each glycosylated (N-linked (GlcNAc...) asparagine). Tyrosine 341 lines the a beta-D-glucoside pocket. An N-linked (GlcNAc...) asparagine glycan is attached at asparagine 371. A beta-D-glucoside contacts are provided by residues glutamate 413, tryptophan 463, 470–471, and phenylalanine 479; that span reads EW. Glutamate 413 serves as the catalytic Nucleophile. N-linked (GlcNAc...) asparagine glycans are attached at residues asparagine 522 and asparagine 553.

It belongs to the glycosyl hydrolase 1 family.

It carries out the reaction Hydrolysis of terminal, non-reducing beta-D-glucosyl residues with release of beta-D-glucose.. The protein is Beta-glucosidase 29 of Arabidopsis thaliana (Mouse-ear cress).